The primary structure comprises 1035 residues: Cell-division control histidine kinase PdhS (1035 aa).

The interval 1-613 (MSGSYPFIDI…HADGSEEPVD (613 aa)) is important for polar localization. Residues 500–533 (QGLANTRAESETPVSETSSIEPVEPTPPVKTRSE) are disordered. The tract at residues 614 to 1035 (AHLNAIAWRG…VFPPTRVLAD (422 aa)) is interaction with DivK. Residues 659 to 730 (HVEELKTILD…YLHGLSGNGV (72 aa)) form the PAS domain. A Histidine kinase domain is found at 802–1031 (RISHEIRTPL…VVEIVFPPTR (230 aa)). At His-805 the chain carries Phosphohistidine; by autocatalysis.

Interacts with DivK.

The protein resides in the cytoplasm. It carries out the reaction ATP + protein L-histidine = ADP + protein N-phospho-L-histidine.. Functionally, functions as a polar differentiation marker. Essential protein that, by localizing in the old pole of dividing cells, controls cell division and maturation, probably through control of DivK phosphorylation status and cellular distribution, which in turn regulates CtrA, a transcriptional regulator of the minB operon. The asymmetrical localization of this protein is probably required for cells to enter a new division cycle. In Brucella canis (strain ATCC 23365 / NCTC 10854 / RM-666), this protein is Cell-division control histidine kinase PdhS (pdhS).